A 630-amino-acid polypeptide reads, in one-letter code: PR domain zinc finger protein 5 (630 aa).

Residues 8–124 enclose the SET domain; the sequence is DRFSLKSSRV…TDTELLIGYL (117 aa). The C2H2-type 1 zinc finger occupies 167-190; it reads YACPQCESSFTSEDILAEHLQTLH. A C2H2-type 2; atypical zinc finger spans residues 199–221; sequence FKCKNCGKKFPVKQALQRHVLQC. The C2H2-type 3; atypical zinc-finger motif lies at 234–256; that stretch reads FQCSVCNSSFSSASSFEQHQETC. 13 C2H2-type zinc fingers span residues 262-287, 295-317, 320-342, 348-370, 376-398, 404-426, 432-455, 461-483, 489-511, 517-539, 545-567, 573-595, and 602-625; these read FVCK…ENVH, LICS…RKIH, FDCQ…MITH, YNCE…KVIH, YKCK…KKTH, FQCE…LLIH, FKCH…QVVH, YRCE…KKTH, KICP…IRSH, YQCP…IRTH, YKCS…KRTH, FQCD…KMTH, and AECQ…DNIH.

The protein belongs to the class V-like SAM-binding methyltransferase superfamily. In terms of assembly, interacts with EHMT2/G9A, GFI1 and HDAC1. Widely expressed with highest levels in colon and ovary. Tends to be silenced in breast, colorectal, gastric and liver cancer tissues.

It is found in the nucleus. Sequence-specific DNA-binding transcription factor. Represses transcription at least in part by recruitment of the histone methyltransferase EHMT2/G9A and histone deacetylases such as HDAC1. Regulates hematopoiesis-associated protein-coding and microRNA (miRNA) genes. May regulate the expression of proteins involved in extracellular matrix development and maintenance, including fibrillar collagens, such as COL4A1 and COL11A1, connective tissue components, such as HAPLN1, and molecules regulating cell migration and adhesion, including EDIL3 and TGFB2. May cause G2/M arrest and apoptosis in cancer cells. In Homo sapiens (Human), this protein is PR domain zinc finger protein 5 (PRDM5).